Reading from the N-terminus, the 122-residue chain is Beta-2-microglobulin (122 aa).

The first 22 residues, 1 to 22 (MMARIFILALLGQLCFLPYLDA), serve as a signal peptide directing secretion. The Ig-like C1-type domain maps to 27–115 (PKVQVYSRHP…HLTLQEPKVV (89 aa)). Cysteines 47 and 102 form a disulfide.

It belongs to the beta-2-microglobulin family. Heterodimer of an alpha chain and a beta chain. Beta-2-microglobulin is the beta-chain of major histocompatibility complex class I molecules.

Its subcellular location is the secreted. In terms of biological role, component of the class I major histocompatibility complex (MHC). Involved in the presentation of peptide antigens to the immune system. This is Beta-2-microglobulin (B2M) from Trichosurus vulpecula (Brush-tailed possum).